The chain runs to 430 residues: 3-phosphoshikimate 1-carboxyvinyltransferase (430 aa).

The 3-phosphoshikimate site is built by Lys25, Ser26, and Arg30. Lys25 contacts phosphoenolpyruvate. 2 residues coordinate phosphoenolpyruvate: Gly97 and Arg125. 4 residues coordinate 3-phosphoshikimate: Ser170, Gln172, Asp318, and Lys345. Gln172 contributes to the phosphoenolpyruvate binding site. Asp318 functions as the Proton acceptor in the catalytic mechanism. Positions 349 and 391 each coordinate phosphoenolpyruvate.

Belongs to the EPSP synthase family. As to quaternary structure, monomer.

The protein localises to the cytoplasm. The catalysed reaction is 3-phosphoshikimate + phosphoenolpyruvate = 5-O-(1-carboxyvinyl)-3-phosphoshikimate + phosphate. The protein operates within metabolic intermediate biosynthesis; chorismate biosynthesis; chorismate from D-erythrose 4-phosphate and phosphoenolpyruvate: step 6/7. Its function is as follows. Catalyzes the transfer of the enolpyruvyl moiety of phosphoenolpyruvate (PEP) to the 5-hydroxyl of shikimate-3-phosphate (S3P) to produce enolpyruvyl shikimate-3-phosphate and inorganic phosphate. The sequence is that of 3-phosphoshikimate 1-carboxyvinyltransferase from Shouchella clausii (strain KSM-K16) (Alkalihalobacillus clausii).